We begin with the raw amino-acid sequence, 756 residues long: Rab11 family-interacting protein 3 (756 aa).

Positions 1-24 (MASAPPASPPGSEPPGPDPEPGGP) are enriched in pro residues. The tract at residues 1 to 204 (MASAPPASPP…SEPVGSQEDG (204 aa)) is disordered. An important for binding to DYNC1LI1 region spans residues 2-435 (ASAPPASPPG…RLSSKKVARY (434 aa)). Residues 27 to 39 (PGAAQLAPGPAEL) are compositionally biased toward low complexity. The residue at position 52 (serine 52) is a Phosphoserine. A compositionally biased stretch (low complexity) spans 53–68 (PGLDEPAPGAAADGGA). Residues 84 to 94 (DPGPSAPPPRS) show a composition bias toward pro residues. The residue at position 102 (serine 102) is a Phosphoserine; by CDK1. EF-hand domains lie at 202–237 (EDGPRLRAVFDALDGDGDGFVRIEDFIQFATVYGAE) and 234–269 (YGAEQVKDLTKYLDPSGLGVISFEDFYQGITAIRNG). The Ca(2+) site is built by aspartate 215, aspartate 217, aspartate 219, aspartate 226, aspartate 247, serine 249, and aspartate 258. Serine 281, serine 348, serine 488, serine 538, serine 647, and serine 648 each carry phosphoserine. The segment at 484-588 (GEQHSRLRQE…LLDEIESLTL (105 aa)) is ARF-binding domain (ABD). A coiled-coil region spans residues 485–694 (EQHSRLRQEN…NGQIITLSIQ (210 aa)). The interval 645 to 664 (RSSSMGLQEYHSRARESELE) is disordered. The span at 654 to 664 (YHSRARESELE) shows a compositional bias: basic and acidic residues. In terms of domain architecture, FIP-RBD spans 694-756 (QGAKSLFSTA…ETNPSILEVK (63 aa)).

As to quaternary structure, homodimer. Interacts with RAB11A; the interaction is direct and is required for the recruitment to endosomes. Interacts with RAB11B. Forms a ternary complex with RAB11A and dynein intermediate chain DYNC1LI1; RAB11FIP3 links RAB11A to dynein and the interaction regulates endocytic trafficking. Interacts with dynein intermediate chain and dynactin (DCTN1); the interaction activates dynein processivity. Interacts with ARF6 and EXOC7; the interaction serves for recruitment and tethering of recycling endosomes-derived vesicles to the cleavage furrow/midbody. Interacts with RACGAP1/MgcRacGAP; the interaction occurs at late telophase and is required for recruitment and tethering of recycling endosomes-derived vesicles to the cleavage furrow/midbody. Forms a complex with RAB11A and Rabin8/RAB3IP, probably a heterohexamer with two of each protein subunit, where RAB3IP and RAB11FIP3 simultaneously bind to RAB11A; the complex promotes preciliary trafficking. Forms a complex containing RAB11A, ASAP1, RAB3IP, RAP11FIP3 and ARF4; the complex promotes preciliary trafficking; the complex binds to RHO in photoreceptor cells and promotes RHO ciliary transport. Interacts with RAB11FIP4. Interacts with RAB25. Post-translationally, phosphorylated at Ser-102 by CDK1 during metaphase, and dephosphorylated as cells enter telophase.

The protein resides in the endosome membrane. It is found in the recycling endosome membrane. The protein localises to the cytoplasm. It localises to the cytoskeleton. Its subcellular location is the microtubule organizing center. The protein resides in the centrosome. It is found in the cleavage furrow. The protein localises to the midbody. It localises to the golgi apparatus membrane. Its subcellular location is the golgi apparatus. The protein resides in the trans-Golgi network membrane. Downstream effector molecule for Rab11 GTPase which is involved in endocytic trafficking, cytokinesis and intracellular ciliogenesis by participating in membrane delivery. Recruited by Rab11 to endosomes where it links Rab11 to dynein motor complex. The functional Rab11-RAB11FIP3-dynein complex regulates the movement of peripheral sorting endosomes (SE) along microtubule tracks toward the microtubule organizing center/centrosome, generating the endocytic recycling compartment (ERC) during interphase of cell cycle. Facilitates the interaction between dynein and dynactin and activates dynein processivity. Binding with ASAP1 is needed to regulate the pericentrosomal localization of recycling endosomes. The Rab11-RAB11FIP3 complex is also implicated in the transport during telophase of vesicles derived from recycling endosomes to the cleavage furrow via centrosome-anchored microtubules, where the vesicles function to deliver membrane during late cytokinesis and abscission. The recruitment of Rab11-RAB11FIP3-containing endosomes to the cleavage furrow and tethering to the midbody is co-mediated by RAB11FIP3 interaction with ARF6-exocyst and RACGAP1-MKLP1 tethering complexes. Also involved in the Rab11-Rabin8-Rab8 ciliogenesis cascade by facilitating the orderly assembly of a ciliary targeting complex containing Rab11, ASAP1, Rabin8/RAB3IP, RAB11FIP3 and ARF4, which directs preciliary vesicle trafficking to mother centriole and ciliogenesis initiation. Also promotes the activity of Rab11 and ASAP1 in the ARF4-dependent Golgi-to-cilia transport of the sensory receptor rhodopsin. Competes with WDR44 for binding to Rab11, which controls intracellular ciliogenesis pathway. May play a role in breast cancer cell motility by regulating actin cytoskeleton. The protein is Rab11 family-interacting protein 3 of Homo sapiens (Human).